A 123-amino-acid polypeptide reads, in one-letter code: Histone H2B.1, embryonic (123 aa).

The interval 1–32 is disordered; the sequence is MAPTGQVAKKGSKKAVKPPRASGGKKRHRKRK. Residues 10–32 show a composition bias toward basic residues; the sequence is KGSKKAVKPPRASGGKKRHRKRK. O-linked (GlcNAc) serine glycosylation occurs at serine 110. Lysine 118 is covalently cross-linked (Glycyl lysine isopeptide (Lys-Gly) (interchain with G-Cter in ubiquitin)).

It belongs to the histone H2B family. The nucleosome is a histone octamer containing two molecules each of H2A, H2B, H3 and H4 assembled in one H3-H4 heterotetramer and two H2A-H2B heterodimers. The octamer wraps approximately 147 bp of DNA. Monoubiquitination of Lys-118 gives a specific tag for epigenetic transcriptional activation and is also prerequisite for histone H3 'Lys-4' and 'Lys-79' methylation. In terms of processing, glcNAcylation at Ser-110 promotes monoubiquitination of Lys-118. It fluctuates in response to extracellular glucose, and associates with transcribed genes.

It is found in the nucleus. It localises to the chromosome. Core component of nucleosome. Nucleosomes wrap and compact DNA into chromatin, limiting DNA accessibility to the cellular machineries which require DNA as a template. Histones thereby play a central role in transcription regulation, DNA repair, DNA replication and chromosomal stability. DNA accessibility is regulated via a complex set of post-translational modifications of histones, also called histone code, and nucleosome remodeling. This is Histone H2B.1, embryonic from Psammechinus miliaris (Green sea urchin).